The following is an 87-amino-acid chain: Putative regulatory protein BCQ_3657 (87 aa).

The protein belongs to the RemA family.

This is Putative regulatory protein BCQ_3657 from Bacillus cereus (strain Q1).